Reading from the N-terminus, the 499-residue chain is Thermostable carboxypeptidase 1 (499 aa).

The 494-residue stretch at Gln-6–Leu-499 folds into the Peptidase M32 domain. An HPF motif is present at residues His-238–Phe-240. Residues Asp-248 to Thr-252 carry the DXRXT motif. His-269 contributes to the Co(2+) binding site. Positions His-269–His-273 match the HEXXH motif. Glu-270 functions as the Proton donor/acceptor in the catalytic mechanism. Residues His-273 and Glu-299 each contribute to the Co(2+) site. Residues His-298–Gln-301 carry the HES/GQ motif. An I/NRXXA/SD motif is present at residues Ile-350–Asp-355. The short motif at Gly-405–Trp-412 is the GXXQDXHW element.

The protein belongs to the peptidase M32 family. In terms of assembly, homodimer. Co(2+) serves as cofactor. Mn(2+) is required as a cofactor.

It carries out the reaction Release of a C-terminal amino acid with broad specificity, except for -Pro.. With respect to regulation, EDTA and DTT reversibly abolish carboxypeptidase activity. In terms of biological role, broad specificity carboxypetidase that releases amino acids sequentially from the C-terminus, including neutral, aromatic, polar and basic residues, but not Pro, Gly, Asp and Glu. In Pyrococcus furiosus (strain ATCC 43587 / DSM 3638 / JCM 8422 / Vc1), this protein is Thermostable carboxypeptidase 1.